We begin with the raw amino-acid sequence, 429 residues long: Adenylosuccinate synthetase (429 aa).

GTP-binding positions include 12-18 and 40-42; these read GDEGKGK and GHT. Catalysis depends on aspartate 13, which acts as the Proton acceptor. Residues aspartate 13 and glycine 40 each contribute to the Mg(2+) site. Residues 13 to 16, 38 to 41, threonine 129, arginine 143, glutamine 224, threonine 239, and arginine 303 contribute to the IMP site; these read DEGK and NAGH. Residue histidine 41 is the Proton donor of the active site. Residue 299 to 305 coordinates substrate; that stretch reads ATTGRRR. GTP contacts are provided by residues arginine 305, 331–333, and 413–415; these read KLD and SVG.

It belongs to the adenylosuccinate synthetase family. Homodimer. Mg(2+) serves as cofactor.

Its subcellular location is the cytoplasm. The enzyme catalyses IMP + L-aspartate + GTP = N(6)-(1,2-dicarboxyethyl)-AMP + GDP + phosphate + 2 H(+). It participates in purine metabolism; AMP biosynthesis via de novo pathway; AMP from IMP: step 1/2. Plays an important role in the de novo pathway of purine nucleotide biosynthesis. Catalyzes the first committed step in the biosynthesis of AMP from IMP. The sequence is that of Adenylosuccinate synthetase from Desulforapulum autotrophicum (strain ATCC 43914 / DSM 3382 / VKM B-1955 / HRM2) (Desulfobacterium autotrophicum).